The sequence spans 249 residues: Acidic leucine-rich nuclear phosphoprotein 32 family member A (249 aa).

Residue Thr-15 is modified to Phosphothreonine. Ser-17 is subject to Phosphoserine. 4 LRR repeats span residues 18 to 38, 43 to 64, 65 to 87, and 89 to 110; these read DVKELVLDNSRSNEGKLEGLT, ELEFLSTINVGLTSIANLPKLN, KLKKLELSDNRVSGGLEVLAEKC, and NLTHLNLSGNKIKDLSTIEPLK. The LRRCT domain occupies 123-161; sequence CEVTNLNDYRENVFKLLPQLTYLDGYDRDDKEAPDSDAE. Over residues 147 to 156 the composition is skewed to basic and acidic residues; it reads GYDRDDKEAP. The interval 147–249 is disordered; that stretch reads GYDRDDKEAP…EPEDEGEDDD (103 aa). Residues 150–174 are necessary for tumor-suppressive function; it reads RDDKEAPDSDAEGYVEGLDDEEEDE. Residues 157–230 are compositionally biased toward acidic residues; that stretch reads DSDAEGYVEG…DEEDEEELGE (74 aa). 2 positions are modified to phosphoserine; by CK2: Ser-158 and Ser-204. Positions 165–249 are interaction with E4F1; sequence EGLDDEEEDE…EPEDEGEDDD (85 aa).

This sequence belongs to the ANP32 family. Component of the SET complex, composed of at least ANP32A, APEX1, HMGB2, NME1, SET and TREX1. Directly interacts with SET. Interacts with ATXN1/SCA1. Interacts with MAP1B. Interacts with ELAVL1. Part of the INHAT (inhibitor of histone acetyltransferases) complex. Interacts with E4F1. In terms of assembly, (Microbial infection) Interacts (via C-terminus) with influenza virus A protein PB2; this interaction promotes viral replication. As to quaternary structure, (Microbial infection) Interacts (via C-terminus) with influenza virus B protein PB2; this interaction promotes viral replication. (Microbial infection) Interacts (via C-terminus) with influenza virus C protein PB2; this interaction promotes viral replication by bridging viral replicase dimers together. In terms of processing, phosphorylated on serine residues, at least in part by casein kinase 2/CK2. Post-translationally, the N-terminus is blocked. Some glutamate residues are glycylated by TTLL8. This modification occurs exclusively on glutamate residues and results in a glycine chain on the gamma-carboxyl group. Expressed in all tissues tested. Highly expressed in kidney and skeletal muscle, moderate levels of expression in brain, placenta and pancreas, and weakly expressed in lung. Found in all regions of the brain examined (amygdala, caudate nucleus, corpus callosum, hippocampus and thalamus), with highest levels in amygdala.

The protein resides in the nucleus. The protein localises to the cytoplasm. It localises to the endoplasmic reticulum. Multifunctional protein that is involved in the regulation of many processes including tumor suppression, apoptosis, cell cycle progression or transcription. Promotes apoptosis by favouring the activation of caspase-9/CASP9 and allowing apoptosome formation. In addition, plays a role in the modulation of histone acetylation and transcription as part of the INHAT (inhibitor of histone acetyltransferases) complex. Inhibits the histone-acetyltranferase activity of EP300/CREBBP (CREB-binding protein) and EP300/CREBBP-associated factor by histone masking. Preferentially binds to unmodified histone H3 and sterically inhibiting its acetylation and phosphorylation leading to cell growth inhibition. Participates in other biochemical processes such as regulation of mRNA nuclear-to-cytoplasmic translocation and stability by its association with ELAVL1 (Hu-antigen R). Plays a role in E4F1-mediated transcriptional repression as well as inhibition of protein phosphatase 2A. Functionally, (Microbial infection) Plays an essential role in influenza A, B and C viral genome replication. Mechanistically, mediates the assembly of the viral replicase asymmetric dimers composed of PB1, PB2 and PA via its N-terminal region. Also plays an essential role in foamy virus mRNA export from the nucleus. The protein is Acidic leucine-rich nuclear phosphoprotein 32 family member A (ANP32A) of Homo sapiens (Human).